The following is a 149-amino-acid chain: Transcriptional repressor NrdR (149 aa).

The segment at 3–34 (CPFCFAVDTKVIDSRLVGEGSSVRRRRQCLVC) is a zinc-finger region. Residues 49 to 139 (PRVVKSNDVR…VYRSFEDIKE (91 aa)) enclose the ATP-cone domain.

Belongs to the NrdR family. The cofactor is Zn(2+).

In terms of biological role, negatively regulates transcription of bacterial ribonucleotide reductase nrd genes and operons by binding to NrdR-boxes. The chain is Transcriptional repressor NrdR from Escherichia coli O139:H28 (strain E24377A / ETEC).